We begin with the raw amino-acid sequence, 699 residues long: Ubiquitin-like modifier-activating enzyme atg7 (699 aa).

The GXGXXG motif motif lies at 370–375 (GAGTLG). Catalysis depends on Cys-550, which acts as the Glycyl thioester intermediate. The segment at 680 to 699 (MQWSEDEEGMDEEEGEGELI) is disordered. Residues 682–699 (WSEDEEGMDEEEGEGELI) are compositionally biased toward acidic residues.

The protein belongs to the ATG7 family. In terms of assembly, homodimer.

The protein localises to the cytoplasm. The protein resides in the preautophagosomal structure. Functionally, E1-like activating enzyme involved in the 2 ubiquitin-like systems required for cytoplasm to vacuole transport (Cvt) and autophagy. Activates atg12 for its conjugation with apg-4/atg5 and apg-6/atg8 for its conjugation with phosphatidylethanolamine. Both systems are needed for the apg-6/atg8 association to Cvt vesicles and autophagosomes membranes. Autophagy is essential for maintenance of amino acid levels and protein synthesis under nitrogen starvation. Required for selective autophagic degradation of the nucleus (nucleophagy) as well as for mitophagy which contributes to regulate mitochondrial quantity and quality by eliminating the mitochondria to a basal level to fulfill cellular energy requirements and preventing excess ROS production. Plays a role in the regulation of filamentous growth and chronological longevity. The protein is Ubiquitin-like modifier-activating enzyme atg7 (apg-5) of Neurospora crassa (strain ATCC 24698 / 74-OR23-1A / CBS 708.71 / DSM 1257 / FGSC 987).